The following is a 261-amino-acid chain: Cytochrome c oxidase subunit 3 (261 aa).

At 1–15 (MTHQSHAYHMVKPSP) the chain is on the mitochondrial matrix side. The helical transmembrane segment at 16–34 (WPLTGALSALLMTSGLAMW) threads the bilayer. Residues 35–40 (FHFHSM) lie on the Mitochondrial intermembrane side of the membrane. A helical transmembrane segment spans residues 41 to 66 (TLLMLGLLTNTLTMYQWWRDVTREST). Topologically, residues 67–72 (YQGHHT) are mitochondrial matrix. The chain crosses the membrane as a helical span at residues 73 to 105 (PPVQKGLRYGMILFITSEVFFFAGFFWAFYHSS). Over 106–128 (LAPTPQLGGHWPPTGITPLNPLE) the chain is Mitochondrial intermembrane. Residues 129 to 152 (VPLLNTSVLLASGVSITWAHHSLM) form a helical membrane-spanning segment. The Mitochondrial matrix segment spans residues 153 to 155 (ENN). Residues 156–183 (RNQMIQALLITILLGLYFTLLQASEYFE) traverse the membrane as a helical segment. The Mitochondrial intermembrane segment spans residues 184-190 (SPFTISD). A helical transmembrane segment spans residues 191 to 223 (GIYGSTFFVATGFHGLHVIIGSTFLTICFIRQL). Topologically, residues 224–232 (MFHFTSKHH) are mitochondrial matrix. Residues 233-256 (FGFEAAAWYWHFVDVVWLFLYVSI) form a helical membrane-spanning segment. The Mitochondrial intermembrane portion of the chain corresponds to 257–261 (YWWGS).

The protein belongs to the cytochrome c oxidase subunit 3 family. As to quaternary structure, component of the cytochrome c oxidase (complex IV, CIV), a multisubunit enzyme composed of 14 subunits. The complex is composed of a catalytic core of 3 subunits MT-CO1, MT-CO2 and MT-CO3, encoded in the mitochondrial DNA, and 11 supernumerary subunits COX4I1 (or COX4I2), COX5A, COX5B, COX6A1 (or COX6A2), COX6B1 (or COX6B2), COX6C, COX7A2 (or COX7A1), COX7B, COX7C, COX8A and NDUFA4, which are encoded in the nuclear genome. The complex exists as a monomer or a dimer and forms supercomplexes (SCs) in the inner mitochondrial membrane with NADH-ubiquinone oxidoreductase (complex I, CI) and ubiquinol-cytochrome c oxidoreductase (cytochrome b-c1 complex, complex III, CIII), resulting in different assemblies (supercomplex SCI(1)III(2)IV(1) and megacomplex MCI(2)III(2)IV(2)).

It localises to the mitochondrion inner membrane. The enzyme catalyses 4 Fe(II)-[cytochrome c] + O2 + 8 H(+)(in) = 4 Fe(III)-[cytochrome c] + 2 H2O + 4 H(+)(out). Component of the cytochrome c oxidase, the last enzyme in the mitochondrial electron transport chain which drives oxidative phosphorylation. The respiratory chain contains 3 multisubunit complexes succinate dehydrogenase (complex II, CII), ubiquinol-cytochrome c oxidoreductase (cytochrome b-c1 complex, complex III, CIII) and cytochrome c oxidase (complex IV, CIV), that cooperate to transfer electrons derived from NADH and succinate to molecular oxygen, creating an electrochemical gradient over the inner membrane that drives transmembrane transport and the ATP synthase. Cytochrome c oxidase is the component of the respiratory chain that catalyzes the reduction of oxygen to water. Electrons originating from reduced cytochrome c in the intermembrane space (IMS) are transferred via the dinuclear copper A center (CU(A)) of subunit 2 and heme A of subunit 1 to the active site in subunit 1, a binuclear center (BNC) formed by heme A3 and copper B (CU(B)). The BNC reduces molecular oxygen to 2 water molecules using 4 electrons from cytochrome c in the IMS and 4 protons from the mitochondrial matrix. This chain is Cytochrome c oxidase subunit 3 (MT-CO3), found in Homo sapiens (Human).